A 415-amino-acid polypeptide reads, in one-letter code: Tumor necrosis factor receptor superfamily member 3 (415 aa).

A signal peptide spans 1 to 30; the sequence is MRLPRASSPCGLAWGPLLLGLSGLLVASQP. Over 31–223 the chain is Extracellular; sequence QLVPPYRIEN…NPPEPGAMLL (193 aa). N-linked (GlcNAc...) asparagine glycosylation is present at Asn40. 4 TNFR-Cys repeats span residues 42-81, 82-124, 125-170, and 171-213; these read TCWD…TVCK, TCPH…KAEC, RCQP…VNCV, and PCKP…TICK. Cystine bridges form between Cys43–Cys58, Cys59–Cys72, Cys62–Cys80, Cys83–Cys98, Cys101–Cys116, Cys104–Cys124, Cys126–Cys132, Cys139–Cys150, Cys142–Cys169, and Cys172–Cys187. A glycan (N-linked (GlcNAc...) asparagine) is linked at Asn179. The chain crosses the membrane as a helical span at residues 224–244; sequence LAILLSLVLFLLFTTVLACAW. The Cytoplasmic portion of the chain corresponds to 245–415; sequence MRHPSLCRKL…ETETLGCQDL (171 aa). The tract at residues 261–304 is disordered; the sequence is HPEGEESPPCPAPRADPHFPDLAEPLLPMSGDLSPSPAGPPTAP. Residue Ser315 is modified to Phosphoserine. The disordered stretch occupies residues 361–399; the sequence is LGGTRGPGDPPAPPEPPYPTPEEGAPGPSELSTPYQEDG. Residues 368–380 show a composition bias toward pro residues; sequence GDPPAPPEPPYPT.

Self-associates; dimerization and trimerization are promoted by lymphotoxin (LTA(3)). Associates with TRAF3. Associates with TRAF4. Associates with TRAF5.

The protein resides in the membrane. In terms of biological role, receptor for the heterotrimeric lymphotoxin containing LTA and LTB, and for TNFS14/LIGHT. Activates NF-kappa-B signaling upon stimulation with lymphotoxin. Promotes apoptosis via TRAF3 and TRAF5. May play a role in the development of lymphoid organs. (Microbial infection) Plays a role in host defense against Zika virus infection. In Mus musculus (Mouse), this protein is Tumor necrosis factor receptor superfamily member 3 (Ltbr).